A 40-amino-acid chain; its full sequence is Photosystem II reaction center protein J (40 aa).

A helical membrane pass occupies residues 8 to 28 (IPLWLVGTVAGILVIGLIGIF).

It belongs to the PsbJ family. As to quaternary structure, PSII is composed of 1 copy each of membrane proteins PsbA, PsbB, PsbC, PsbD, PsbE, PsbF, PsbH, PsbI, PsbJ, PsbK, PsbL, PsbM, PsbT, PsbX, PsbY, PsbZ, Psb30/Ycf12, at least 3 peripheral proteins of the oxygen-evolving complex and a large number of cofactors. It forms dimeric complexes.

Its subcellular location is the plastid. The protein resides in the chloroplast thylakoid membrane. Its function is as follows. One of the components of the core complex of photosystem II (PSII). PSII is a light-driven water:plastoquinone oxidoreductase that uses light energy to abstract electrons from H(2)O, generating O(2) and a proton gradient subsequently used for ATP formation. It consists of a core antenna complex that captures photons, and an electron transfer chain that converts photonic excitation into a charge separation. This Gnetum parvifolium (Small-leaved jointfir) protein is Photosystem II reaction center protein J.